Here is a 126-residue protein sequence, read N- to C-terminus: Interleukin-18-binding protein (126 aa).

The first 16 residues, 1–16, serve as a signal peptide directing secretion; the sequence is MRILFLIAFMYGCVHS.

This sequence belongs to the orthopoxvirus OPG022 family.

It is found in the secreted. In terms of biological role, soluble IL18-binding protein that may modulate the host antiviral response. The protein is Interleukin-18-binding protein (OPG022) of Cynomys gunnisoni (Gunnison's prairie dog).